The chain runs to 703 residues: tRNA 5-methylaminomethyl-2-thiouridine biosynthesis bifunctional protein MnmC (703 aa).

Positions Met-1–His-281 are tRNA (mnm(5)s(2)U34)-methyltransferase. The tract at residues Val-286–Leu-703 is FAD-dependent cmnm(5)s(2)U34 oxidoreductase.

In the N-terminal section; belongs to the methyltransferase superfamily. tRNA (mnm(5)s(2)U34)-methyltransferase family. The protein in the C-terminal section; belongs to the DAO family. The cofactor is FAD.

It is found in the cytoplasm. It catalyses the reaction 5-aminomethyl-2-thiouridine(34) in tRNA + S-adenosyl-L-methionine = 5-methylaminomethyl-2-thiouridine(34) in tRNA + S-adenosyl-L-homocysteine + H(+). In terms of biological role, catalyzes the last two steps in the biosynthesis of 5-methylaminomethyl-2-thiouridine (mnm(5)s(2)U) at the wobble position (U34) in tRNA. Catalyzes the FAD-dependent demodification of cmnm(5)s(2)U34 to nm(5)s(2)U34, followed by the transfer of a methyl group from S-adenosyl-L-methionine to nm(5)s(2)U34, to form mnm(5)s(2)U34. The protein is tRNA 5-methylaminomethyl-2-thiouridine biosynthesis bifunctional protein MnmC of Shewanella sp. (strain MR-7).